The primary structure comprises 347 residues: Twinfilin-2 (347 aa).

2 ADF-H domains span residues 3–137 and 175–311; these read LVLV…RHIT and GLAF…DEVH. Positions 314–347 are disordered; it reads QHAHKQAFAKPRGPAGKRGNKRLIKGGGENGGNS. Positions 338 to 347 are enriched in gly residues; that stretch reads KGGGENGGNS.

Belongs to the actin-binding proteins ADF family. Twinfilin subfamily. In terms of assembly, interacts with G-actin; ADP-actin form and capping protein (CP).

The protein localises to the cytoplasm. It localises to the cytoskeleton. It is found in the perinuclear region. In terms of biological role, actin-binding protein involved in motile and morphological processes. Inhibits actin polymerization, likely by sequestering G-actin. The protein is Twinfilin-2 (twf2) of Danio rerio (Zebrafish).